The following is a 161-amino-acid chain: Endoribonuclease YbeY (161 aa).

The Zn(2+) site is built by histidine 120, histidine 124, and aspartate 130.

The protein belongs to the endoribonuclease YbeY family. Zn(2+) serves as cofactor.

The protein resides in the cytoplasm. In terms of biological role, single strand-specific metallo-endoribonuclease involved in late-stage 70S ribosome quality control and in maturation of the 3' terminus of the 16S rRNA. The chain is Endoribonuclease YbeY from Chlamydia trachomatis serovar A (strain ATCC VR-571B / DSM 19440 / HAR-13).